Here is a 215-residue protein sequence, read N- to C-terminus: Cytochrome b6 (215 aa).

Residues 32 to 52 (IFYCIGGITFTCFIMQVASGF) traverse the membrane as a helical segment. Heme c is bound at residue Cys35. His86 and His100 together coordinate heme b. 3 helical membrane-spanning segments follow: residues 90 to 110 (ASMM…TGGF), 116 to 136 (LTWV…VTGY), and 186 to 206 (LHTF…FLMI). His187 and His202 together coordinate heme b.

This sequence belongs to the cytochrome b family. PetB subfamily. The 4 large subunits of the cytochrome b6-f complex are cytochrome b6, subunit IV (17 kDa polypeptide, PetD), cytochrome f and the Rieske protein, while the 4 small subunits are PetG, PetL, PetM and PetN. The complex functions as a dimer. Heme b serves as cofactor. Requires heme c as cofactor.

Its subcellular location is the plastid. It localises to the chloroplast thylakoid membrane. In terms of biological role, component of the cytochrome b6-f complex, which mediates electron transfer between photosystem II (PSII) and photosystem I (PSI), cyclic electron flow around PSI, and state transitions. The sequence is that of Cytochrome b6 from Mesostigma viride (Green alga).